A 118-amino-acid chain; its full sequence is Basic phospholipase A2 homolog 1 (118 aa).

7 disulfide bridges follow: Cys-11-Cys-71, Cys-27-Cys-117, Cys-29-Cys-45, Cys-44-Cys-98, Cys-51-Cys-91, Cys-60-Cys-84, and Cys-78-Cys-89. Residues 106-118 (NKNFNIDTKKRCK) are important for membrane-damaging activities in eukaryotes and bacteria; heparin-binding.

This sequence belongs to the phospholipase A2 family. Group I subfamily. D49 sub-subfamily. In terms of tissue distribution, expressed by the venom gland.

The protein localises to the secreted. The protein is Basic phospholipase A2 homolog 1 of Laticauda colubrina (Yellow-lipped sea krait).